The following is a 266-amino-acid chain: Proteasome subunit alpha type-1 (266 aa).

Residues 235 to 266 (DGFKTRPEDIPAVADNEEDDDELHEQPPDVEE) are disordered. The segment covering 249–266 (DNEEDDDELHEQPPDVEE) has biased composition (acidic residues).

The protein belongs to the peptidase T1A family. As to quaternary structure, the 26S proteasome consists of a 20S proteasome core and two 19S regulatory subunits. The 20S proteasome core is composed of 28 subunits that are arranged in four stacked rings, resulting in a barrel-shaped structure. The two end rings are each formed by seven alpha subunits, and the two central rings are each formed by seven beta subunits. The catalytic chamber with the active sites is on the inside of the barrel.

It localises to the cytoplasm. It is found in the nucleus. In terms of biological role, the proteasome is a multicatalytic proteinase complex which is characterized by its ability to cleave peptides with Arg, Phe, Tyr, Leu, and Glu adjacent to the leaving group at neutral or slightly basic pH. The proteasome has an ATP-dependent proteolytic activity. This is Proteasome subunit alpha type-1 from Trypanosoma brucei rhodesiense.